Reading from the N-terminus, the 32-residue chain is Dermaseptin-DA4 (32 aa).

In terms of tissue distribution, expressed by the skin glands.

The protein localises to the secreted. It is found in the target cell membrane. In terms of biological role, antimicrobial peptide with activity against Gram-negative bacteria, but not against Gram-positive bacteria. Active against E.coli (MIC=5 uM), and P.aeruginosa (MIC=40 uM). Acts by disrupting cell membranes. Is able to depolarize membranes of Gram-positive and Gram-negative bacteria. Also acts as a potent chemoattractant for human leukocytes and activates them mainly through a GPCR, possibly FPRL1 coupled to the ERK1/2 MAPK pathway. Is unstructured in water but become helical upon binding to anionic lipids. In contrast to most dermaseptins, is not structured in the presence of zwitterionic lipids. Does not show hemolytic activity. The sequence is that of Dermaseptin-DA4 from Agalychnis dacnicolor (Giant Mexican leaf frog).